The following is a 148-amino-acid chain: uncharacterized protein (148 aa).

This is an uncharacterized protein from Bacillus subtilis (strain 168).